Consider the following 293-residue polypeptide: Acetylglutamate kinase (293 aa).

Residues 70 to 71, R92, and N186 contribute to the substrate site; that span reads GG.

It belongs to the acetylglutamate kinase family. ArgB subfamily.

It is found in the cytoplasm. The enzyme catalyses N-acetyl-L-glutamate + ATP = N-acetyl-L-glutamyl 5-phosphate + ADP. It functions in the pathway amino-acid biosynthesis; L-arginine biosynthesis; N(2)-acetyl-L-ornithine from L-glutamate: step 2/4. Functionally, catalyzes the ATP-dependent phosphorylation of N-acetyl-L-glutamate. This is Acetylglutamate kinase from Synechococcus sp. (strain CC9605).